Here is a 312-residue protein sequence, read N- to C-terminus: Small ribosomal subunit protein uS2 (312 aa).

The protein belongs to the universal ribosomal protein uS2 family. Component of the small ribosomal subunit. Mature ribosomes consist of a small (40S) and a large (60S) subunit. The 40S subunit contains about 33 different proteins and 1 molecule of RNA (18S). The 60S subunit contains about 49 different proteins and 3 molecules of RNA (25S, 5.8S and 5S). Interacts with ribosomal protein S21.

The protein resides in the cytoplasm. Functionally, required for the assembly and/or stability of the 40S ribosomal subunit. Required for the processing of the 20S rRNA-precursor to mature 18S rRNA in a late step of the maturation of 40S ribosomal subunits. This Vitis vinifera (Grape) protein is Small ribosomal subunit protein uS2.